Reading from the N-terminus, the 1007-residue chain is Rho-type GTPase-activating protein 1 (1007 aa).

LIM zinc-binding domains are found at residues 13–66 (CVRC…CFDC) and 70–122 (CKNC…CLSC). 3 disordered regions span residues 203–293 (ITGY…KSPS), 401–478 (EKYS…STSL), and 505–600 (KETA…NDPS). The segment covering 212-221 (NSGSSKFGSN) has biased composition (low complexity). Composition is skewed to polar residues over residues 250–261 (ANMSLNVATDPT) and 270–293 (HSRN…KSPS). The residue at position 278 (Thr278) is a Phosphothreonine. A Phosphoserine modification is found at Ser291. A compositionally biased stretch (basic residues) spans 411–421 (KGRKISRSLSR). A compositionally biased stretch (basic and acidic residues) spans 454–466 (RSQDLMRDNDSHT). Composition is skewed to polar residues over residues 467-478 (GLDTPNSNSTSL) and 529-579 (SPAT…LENS). The residue at position 532 (Thr532) is a Phosphothreonine. The span at 583–600 (EEQKETLYENSESRNDPS) shows a compositional bias: basic and acidic residues. Positions 791 to 1006 (SSLVARCNYE…FIFGNYKDIL (216 aa)) constitute a Rho-GAP domain.

GTPase-activating protein (GAP) for CDC42 and/or RHO1. Negative regulator of the pheromone-response pathway through the STE20 protein kinase; acts at a step between the G-protein and the MAP kinase module. Dominant suppressor of bud emergence defect caused by deletion of IPL2/BEM2. Involved in the control of polarized cell growth and proper bud site selection. In Saccharomyces cerevisiae (strain ATCC 204508 / S288c) (Baker's yeast), this protein is Rho-type GTPase-activating protein 1 (RGA1).